A 327-amino-acid chain; its full sequence is Meiotic coiled-coil protein 6 (327 aa).

The stretch at 66 to 188 (DAFERDSTQR…TETKEMNKIK (123 aa)) forms a coiled coil. The segment covering 175-199 (RRMETETKEMNKIKPKNDSESDRFK) has biased composition (basic and acidic residues). The tract at residues 175–234 (RRMETETKEMNKIKPKNDSESDRFKRNSQSLSQQSPLLDVHSPDNSNHRTMLNINNSSPI) is disordered. Positions 202-212 (SQSLSQQSPLL) are enriched in low complexity. The segment covering 217-232 (PDNSNHRTMLNINNSS) has biased composition (polar residues). The stretch at 243-297 (NEVKNRISRLQKTFADLENQHHSFQQICQTLRKRLENDSSTTKQRLSKLEEIIRN) forms a coiled coil.

Interacts with alp4, kms1 and mbo1.

The protein resides in the nucleus. Its subcellular location is the cytoplasm. The protein localises to the cytoskeleton. It is found in the microtubule organizing center. It localises to the spindle pole body. Functionally, has a role in meiotic nuclear oscillation and recombination. Required to remodel astral microtubules into the 'horsetail' astral array maintaining the 'horsetail' nuclear movement. Promotes homologous paring of chromosomes during this movement. This is Meiotic coiled-coil protein 6 (mcp6) from Schizosaccharomyces pombe (strain 972 / ATCC 24843) (Fission yeast).